Reading from the N-terminus, the 462-residue chain is Argininosuccinate lyase (462 aa).

The protein belongs to the lyase 1 family. Argininosuccinate lyase subfamily.

It localises to the cytoplasm. The enzyme catalyses 2-(N(omega)-L-arginino)succinate = fumarate + L-arginine. It participates in amino-acid biosynthesis; L-arginine biosynthesis; L-arginine from L-ornithine and carbamoyl phosphate: step 3/3. In Methylobacterium nodulans (strain LMG 21967 / CNCM I-2342 / ORS 2060), this protein is Argininosuccinate lyase.